The following is a 518-amino-acid chain: Efflux pump terJ (518 aa).

The helical transmembrane segment at 43–63 (IAFIVVVCMAQLVSQAGLGQV) threads the bilayer. An N-linked (GlcNAc...) asparagine glycan is attached at Asn79. Transmembrane regions (helical) follow at residues 82–102 (QLSW…LGAG), 112–132 (LLFT…AFAE), 135–155 (GPVF…FLLP), 177–197 (AFGS…ALAA), 204–224 (WGFW…IFWV), 244–264 (IAGC…LNMA), 272–292 (PYIY…GYIE), 311–331 (FVLA…FYGW), 339–359 (GISP…GFVA), 364–384 (GLIL…AAFC), 400–420 (WAQL…SFPA), and 439–459 (SLVA…GAIV). Asn466 carries N-linked (GlcNAc...) asparagine glycosylation. A helical membrane pass occupies residues 477–497 (AWYLGVGLAASGIILTMFFAL).

The protein belongs to the major facilitator superfamily.

It localises to the cell membrane. Functionally, efflux pump that might be required for efficient secretion of terrein or other secondary metabolies produced by the terrein genne cluster. The protein is Efflux pump terJ of Aspergillus terreus (strain NIH 2624 / FGSC A1156).